Here is a 974-residue protein sequence, read N- to C-terminus: Kinesin-like protein KIN-7A (974 aa).

The tract at residues 1–29 (MTIKTPGTPVSKMDRTPAVTPGGSSRSRE) is disordered. The Kinesin motor domain maps to 31–353 (KIVVTVRLRP…LYFANRAKEV (323 aa)). 117-124 (GQTSSGKT) contributes to the ATP binding site. 2 coiled-coil regions span residues 362–435 (VVSD…KGLN) and 565–603 (SANL…VMSL). Disordered stretches follow at residues 605–649 (SNIS…PCSP) and 663–713 (NKAP…SSVN). Over residues 616-628 (TKNHHHQSKKKKL) the composition is skewed to basic residues. 2 stretches are compositionally biased toward polar residues: residues 638–649 (NRQNFLKSPCSP) and 666–682 (PQEN…TPQG). The segment covering 683–693 (SEKETPQKGEE) has biased composition (basic and acidic residues).

Belongs to the TRAFAC class myosin-kinesin ATPase superfamily. Kinesin family. KIN-7 subfamily. Phosphorylated at Thr-145, Thr-687 and Thr-703 by CDKAs and CDKBs. Phosphorylated NACK1 fails to mediate cytokinesis. Expressed in roots, flowers, pollen mother cells and embryos.

It localises to the cytoplasm. Its subcellular location is the cytoskeleton. It is found in the phragmoplast. In terms of biological role, probable plus end-directed motor protein that functions in the NACK-PQR (ANP1-MKK6-MPK4) MAP kinase signaling pathway, which is essential for somatic cell cytokinesis, especially for the cell-plate formation and its expansion. Regulates the activity and the localization of ANP1, probably by association through the non-catalytic region of the kinase. Functionally redundant with NACK2 and essential to promote the progression of cytokinesis and for cellularization (formation of the cell plate) during microgametogenesis and megagametogenesis. This is Kinesin-like protein KIN-7A from Arabidopsis thaliana (Mouse-ear cress).